The following is a 64-amino-acid chain: Large ribosomal subunit protein bL35 (64 aa).

Belongs to the bacterial ribosomal protein bL35 family.

The sequence is that of Large ribosomal subunit protein bL35 from Colwellia psychrerythraea (strain 34H / ATCC BAA-681) (Vibrio psychroerythus).